The primary structure comprises 58 residues: Conotoxin Leo-T2 (58 aa).

The N-terminal stretch at 1 to 22 is a signal peptide; the sequence is MRCLPVFIILPLLIPSAPSVDA. Positions 23–47 are excised as a propeptide; it reads QPMTEDDVPLASFHEQTLQELWNKR.

Belongs to the conotoxin T superfamily. Post-translationally, contains 2 disulfide bonds that can be either 'C1-C3, C2-C4' or 'C1-C4, C2-C3', since these disulfide connectivities have been observed for conotoxins with cysteine framework V (for examples, see AC P0DQQ7 and AC P81755). In terms of tissue distribution, expressed by the venom duct.

It is found in the secreted. This is Conotoxin Leo-T2 from Conus leopardus (Leopard cone).